A 211-amino-acid chain; its full sequence is LexA repressor (211 aa).

Residues 27–47 constitute a DNA-binding region (H-T-H motif); that stretch reads QTEIARAFGFKGVRAVQHHLD. Catalysis depends on for autocatalytic cleavage activity residues serine 131 and lysine 168.

It belongs to the peptidase S24 family. In terms of assembly, homodimer.

It carries out the reaction Hydrolysis of Ala-|-Gly bond in repressor LexA.. Its function is as follows. Represses a number of genes involved in the response to DNA damage (SOS response), including recA and lexA. In the presence of single-stranded DNA, RecA interacts with LexA causing an autocatalytic cleavage which disrupts the DNA-binding part of LexA, leading to derepression of the SOS regulon and eventually DNA repair. This chain is LexA repressor, found in Xylella fastidiosa (strain 9a5c).